Reading from the N-terminus, the 131-residue chain is Global transcriptional regulator Spx (131 aa).

C10 and C13 are disulfide-bonded.

Belongs to the ArsC family. Spx subfamily. In terms of assembly, interacts with the C-terminal domain of the alpha subunit of the RNAP.

The protein localises to the cytoplasm. Global transcriptional regulator that plays a key role in stress response and exerts either positive or negative regulation of genes. Acts by interacting with the C-terminal domain of the alpha subunit of the RNA polymerase (RNAP). This interaction can enhance binding of RNAP to the promoter region of target genes and stimulate their transcription, or block interaction of RNAP with activator. The chain is Global transcriptional regulator Spx from Staphylococcus epidermidis (strain ATCC 35984 / DSM 28319 / BCRC 17069 / CCUG 31568 / BM 3577 / RP62A).